We begin with the raw amino-acid sequence, 110 residues long: uncharacterized protein (110 aa).

Disordered regions lie at residues 1 to 42 (MEWG…RAQQ) and 66 to 110 (RQLG…AAEP). Residues 36–68 (REERAQQLLDAVEQRQRQLLDTIAACEEMLRQL) adopt a coiled-coil conformation.

This is an uncharacterized protein from Homo sapiens (Human).